A 145-amino-acid polypeptide reads, in one-letter code: uncharacterized protein (145 aa).

A run of 2 helical transmembrane segments spans residues 20 to 40 and 116 to 136; these read LIGP…GMFF and MIML…VLSA.

Its subcellular location is the membrane. This is an uncharacterized protein from Saccharomyces cerevisiae (strain ATCC 204508 / S288c) (Baker's yeast).